Here is a 160-residue protein sequence, read N- to C-terminus: Deoxyuridine 5'-triphosphate nucleotidohydrolase (160 aa).

Substrate-binding positions include 79–81 (RSG), Asn92, 96–98 (TVD), and Lys106.

It belongs to the dUTPase family. Requires Mg(2+) as cofactor.

The enzyme catalyses dUTP + H2O = dUMP + diphosphate + H(+). The protein operates within pyrimidine metabolism; dUMP biosynthesis; dUMP from dCTP (dUTP route): step 2/2. Functionally, this enzyme is involved in nucleotide metabolism: it produces dUMP, the immediate precursor of thymidine nucleotides and it decreases the intracellular concentration of dUTP so that uracil cannot be incorporated into DNA. This chain is Deoxyuridine 5'-triphosphate nucleotidohydrolase, found in Sinorhizobium medicae (strain WSM419) (Ensifer medicae).